Reading from the N-terminus, the 342-residue chain is Deoxyguanosinetriphosphate triphosphohydrolase-like protein (342 aa).

The HD domain maps to 75 to 190 (RLVHTLEVSQ…VRFADKIAYV (116 aa)).

It belongs to the dGTPase family. Type 2 subfamily.

This chain is Deoxyguanosinetriphosphate triphosphohydrolase-like protein, found in Clostridium perfringens (strain SM101 / Type A).